A 457-amino-acid chain; its full sequence is MISVPLLKGKRVLVMGLGKSGTATARALLAAGAGVMAWDDGEAARKSGAEAGIPIRDPSLLPLDKADLLVWSPGIPHTHPQPHPLAEKARAANLPMVCDVELLAQALPGARMLAVTGTNGKSTTTTLLAHVLDECGLPVAAGGNLGTAALDLPELPGDGRYVLELSSYQLELTHSLKLGVAILLNVTPDHLGRHGGMAGYIAAKRRVFDFLTPGGAAVVGIDDGPCRAIVAELDRRGIRVVKISVDSVLAEGVSAPEGVLLDNAKPVCDLKTIPSLPGRHNWQNACAVYAAARAEGLSPKQIAQALATYPGLAHRQELVGEDHGIAWINDSKATNADAVEKALVCYDHVYWILGGQAKEGGIASLEKHFGRIQHAFLIGEATEAFAATLDGKVRFTRCATLDKAVAAARNLAVSDSIPGAVVLLSPACASWDQFTSFEHRGDTFRELVQAFDQGGAA.

Residue 117–123 coordinates ATP; it reads GTNGKST.

It belongs to the MurCDEF family.

Its subcellular location is the cytoplasm. The enzyme catalyses UDP-N-acetyl-alpha-D-muramoyl-L-alanine + D-glutamate + ATP = UDP-N-acetyl-alpha-D-muramoyl-L-alanyl-D-glutamate + ADP + phosphate + H(+). It functions in the pathway cell wall biogenesis; peptidoglycan biosynthesis. In terms of biological role, cell wall formation. Catalyzes the addition of glutamate to the nucleotide precursor UDP-N-acetylmuramoyl-L-alanine (UMA). The polypeptide is UDP-N-acetylmuramoylalanine--D-glutamate ligase (Paramagnetospirillum magneticum (strain ATCC 700264 / AMB-1) (Magnetospirillum magneticum)).